Consider the following 364-residue polypeptide: Aminomethyltransferase (364 aa).

Belongs to the GcvT family. In terms of assembly, the glycine cleavage system is composed of four proteins: P, T, L and H.

The catalysed reaction is N(6)-[(R)-S(8)-aminomethyldihydrolipoyl]-L-lysyl-[protein] + (6S)-5,6,7,8-tetrahydrofolate = N(6)-[(R)-dihydrolipoyl]-L-lysyl-[protein] + (6R)-5,10-methylene-5,6,7,8-tetrahydrofolate + NH4(+). Its function is as follows. The glycine cleavage system catalyzes the degradation of glycine. The sequence is that of Aminomethyltransferase from Geobacillus kaustophilus (strain HTA426).